Consider the following 430-residue polypeptide: MAEGEDVGWWRSWLQQSYQAVKEKSSEALEFMKRDLTEFTQVVQHDTACTIAATASVVKEKLATEGSSGATEKMKKGLSDFLGVISDTFAPSPDKTIDCDVITLMGTPSGTAEPYDGTKARLYSLQSDPATYCNEPDGPPELFDAWLSQFCLEEKKGEISELLVGSPSIRALYTKMVPAAVSHSEFWHRYFYKVHQLEQEQARRDALKQRAEQSISEEPGWEEEEEELMGISPISPKEAKVPVAKISTFPEGEPGPQSPCEENLVTSVEPPAEVTPSESSESISLVTQIANPATAPEARVLPKDLSQKLLEASLEEQGLAVDVGETGPSPPIHSKPLTPAGHTGGPEPRPPARVETLREEAPTDLRVFELNSDSGKSTPSNNGKKGSSTDISEDWEKDFDLDMTEEEVQMALSKVDASGELEDVEWEDWE.

Phosphoserine occurs at positions 92 and 166. The BSD domain maps to 146–198 (WLSQFCLEEKKGEISELLVGSPSIRALYTKMVPAAVSHSEFWHRYFYKVHQLE). Disordered regions lie at residues 247–298 (STFP…APEA) and 319–398 (LAVD…WEKD). The segment covering 276–291 (PSESSESISLVTQIAN) has biased composition (polar residues). The segment covering 350 to 367 (PPARVETLREEAPTDLRV) has biased composition (basic and acidic residues). Residue threonine 356 is modified to Phosphothreonine. Polar residues predominate over residues 371-390 (NSDSGKSTPSNNGKKGSSTD). Phosphoserine is present on residues serine 387, serine 388, and serine 418.

The polypeptide is BSD domain-containing protein 1 (BSDC1) (Homo sapiens (Human)).